Reading from the N-terminus, the 1357-residue chain is Mediator of RNA polymerase II transcription subunit 13 (1357 aa).

Disordered stretches follow at residues 356–391 (SCNY…GNGF) and 420–487 (DLWN…HRKE). Residues 435–451 (INPTSQQGDSARITSGS) are compositionally biased toward polar residues.

This sequence belongs to the Mediator complex subunit 13 family. Component of the SRB8-11 complex, which itself associates with the Mediator complex.

Its subcellular location is the nucleus. Component of the SRB8-11 complex. The SRB8-11 complex is a regulatory module of the Mediator complex which is itself involved in regulation of basal and activated RNA polymerase II-dependent transcription. The SRB8-11 complex may be involved in the transcriptional repression of a subset of genes regulated by Mediator. It may inhibit the association of the Mediator complex with RNA polymerase II to form the holoenzyme complex. The chain is Mediator of RNA polymerase II transcription subunit 13 (SSN2) from Eremothecium gossypii (strain ATCC 10895 / CBS 109.51 / FGSC 9923 / NRRL Y-1056) (Yeast).